The primary structure comprises 341 residues: Putative ubiquitin-like-specific protease 1B (341 aa).

Catalysis depends on residues H231, D248, and C300.

The protein belongs to the peptidase C48 family.

Protease that catalyzes two essential functions in the SUMO pathway: processing of full-length SUMOs to their mature forms and deconjugation of SUMO from targeted proteins. The protein is Putative ubiquitin-like-specific protease 1B (ULP1B) of Arabidopsis thaliana (Mouse-ear cress).